The sequence spans 1269 residues: Protein cramped-like (1269 aa).

The span at 1-12 shows a compositional bias: gly residues; that stretch reads MTVKLGDGGSGE. Positions 1 to 165 are disordered; that stretch reads MTVKLGDGGS…GKKVRRQWES (165 aa). Basic and acidic residues-rich tracts occupy residues 13 to 24 and 43 to 52; these read DGLKKLGKRAAD and SGTKRDEKTP. Residues 59–74 are compositionally biased toward pro residues; that stretch reads PPAPPGAPQAPSPPQG. The segment covering 105–123 has biased composition (gly residues); that stretch reads GNAGGSGPRGKGAEGGGSS. A compositionally biased stretch (low complexity) spans 124–147; that stretch reads SGNVSGVAPAAPAGGSRSSSRNLG. Residues 151-165 show a composition bias toward basic and acidic residues; it reads GEKEEGKKVRRQWES. The 64-residue stretch at 161–224 folds into the SANT domain; the sequence is RQWESWSTED…FYYRTWHKIT (64 aa). A Phosphoserine modification is found at serine 307. 6 disordered regions span residues 450-541, 581-666, 757-827, 976-1034, 1055-1092, and 1115-1157; these read IQSG…PGAL, DTRP…EVPA, VRPA…NDSD, EGLS…DSFQ, IPLS…SQGE, and VPLS…PSDS. Residues 485–507 are compositionally biased toward low complexity; it reads SSGESSPESAPGEGAALSLSSPD. Basic and acidic residues-rich tracts occupy residues 508 to 518 and 526 to 535; these read APDRPPPRHQD and TPAEGRDSPT. Composition is skewed to polar residues over residues 757-767, 774-806, and 982-1002; these read VRPAQEEQSMT, TVSS…SSGL, and SPLS…TGTH. Composition is skewed to low complexity over residues 1055-1070 and 1125-1140; these read IPLS…LSPP and SDSS…SPQP. Serine 1268 carries the post-translational modification Phosphoserine.

This sequence belongs to the cramped family.

It is found in the nucleus. In Homo sapiens (Human), this protein is Protein cramped-like.